Here is an 86-residue protein sequence, read N- to C-terminus: UPF0457 protein SERP1772 (86 aa).

It belongs to the UPF0457 family.

The chain is UPF0457 protein SERP1772 from Staphylococcus epidermidis (strain ATCC 35984 / DSM 28319 / BCRC 17069 / CCUG 31568 / BM 3577 / RP62A).